Reading from the N-terminus, the 59-residue chain is Small ribosomal subunit protein bS21 (59 aa).

It belongs to the bacterial ribosomal protein bS21 family.

In Acholeplasma laidlawii (strain PG-8A), this protein is Small ribosomal subunit protein bS21.